The chain runs to 293 residues: Probable metal transport system membrane protein CPn_0543/CP_0209/CPj0543/CpB0565 (293 aa).

Transmembrane regions (helical) follow at residues 12–32, 41–61, 68–88, 101–121, 140–160, 183–203, and 253–273; these read LLIL…GGVM, IVSI…LTLW, LSFF…LCIG, LIAM…SRLP, PSDL…VVLC, LWYF…IYVM, and FPVG…SLCV.

Belongs to the ABC-3 integral membrane protein family.

It localises to the cell inner membrane. Its function is as follows. Part of an ATP-driven transport system CPn_0541/CPn_0542/CPn_0543 for a metal. This Chlamydia pneumoniae (Chlamydophila pneumoniae) protein is Probable metal transport system membrane protein CPn_0543/CP_0209/CPj0543/CpB0565.